A 203-amino-acid polypeptide reads, in one-letter code: Outer-membrane lipoprotein carrier protein (203 aa).

Positions 1–19 are cleaved as a signal peptide; it reads MKKSIVVLFSAVLPFAVFA.

Belongs to the LolA family. Monomer.

The protein localises to the periplasm. Participates in the translocation of lipoproteins from the inner membrane to the outer membrane. Only forms a complex with a lipoprotein if the residue after the N-terminal Cys is not an aspartate (The Asp acts as a targeting signal to indicate that the lipoprotein should stay in the inner membrane). In Shewanella amazonensis (strain ATCC BAA-1098 / SB2B), this protein is Outer-membrane lipoprotein carrier protein.